The chain runs to 764 residues: 5-methyltetrahydropteroyltriglutamate--homocysteine methyltransferase (764 aa).

5-methyltetrahydropteroyltri-L-glutamate-binding positions include Arg16–Lys19 and Lys115. L-homocysteine-binding positions include Ile435–Ser437 and Glu488. Residues Ile435–Ser437 and Glu488 contribute to the L-methionine site. 5-methyltetrahydropteroyltri-L-glutamate is bound by residues Arg519–Cys520 and Trp565. Asp603 lines the L-homocysteine pocket. Residue Asp603 participates in L-methionine binding. Glu609 lines the 5-methyltetrahydropteroyltri-L-glutamate pocket. Residues His645, Cys647, and Glu669 each coordinate Zn(2+). His698 acts as the Proton donor in catalysis. Position 730 (Cys730) interacts with Zn(2+).

It belongs to the vitamin-B12 independent methionine synthase family. Zn(2+) serves as cofactor.

It carries out the reaction 5-methyltetrahydropteroyltri-L-glutamate + L-homocysteine = tetrahydropteroyltri-L-glutamate + L-methionine. It functions in the pathway amino-acid biosynthesis; L-methionine biosynthesis via de novo pathway; L-methionine from L-homocysteine (MetE route): step 1/1. Functionally, catalyzes the transfer of a methyl group from 5-methyltetrahydrofolate to homocysteine resulting in methionine formation. The chain is 5-methyltetrahydropteroyltriglutamate--homocysteine methyltransferase from Burkholderia pseudomallei (strain 1106a).